The chain runs to 110 residues: Large ribosomal subunit protein uL22 (110 aa).

Belongs to the universal ribosomal protein uL22 family. As to quaternary structure, part of the 50S ribosomal subunit.

Functionally, this protein binds specifically to 23S rRNA; its binding is stimulated by other ribosomal proteins, e.g. L4, L17, and L20. It is important during the early stages of 50S assembly. It makes multiple contacts with different domains of the 23S rRNA in the assembled 50S subunit and ribosome. In terms of biological role, the globular domain of the protein is located near the polypeptide exit tunnel on the outside of the subunit, while an extended beta-hairpin is found that lines the wall of the exit tunnel in the center of the 70S ribosome. The polypeptide is Large ribosomal subunit protein uL22 (Mannheimia succiniciproducens (strain KCTC 0769BP / MBEL55E)).